A 124-amino-acid chain; its full sequence is Large ribosomal subunit protein uL29 (124 aa).

It belongs to the universal ribosomal protein uL29 family.

This is Large ribosomal subunit protein uL29 (RPL35) from Triticum aestivum (Wheat).